We begin with the raw amino-acid sequence, 552 residues long: Keratin, type II cytoskeletal 6A (552 aa).

Residues 1-14 are compositionally biased toward polar residues; it reads MSTKTVIRSQTSHR. The interval 1 to 21 is disordered; that stretch reads MSTKTVIRSQTSHRGFSAGSA. Residues 1–151 are head; that stretch reads MSTKTVIRSQ…DPTIQRVRTE (151 aa). The interval 152 to 187 is coil 1A; that stretch reads EREQIKTLNNKFASFIDKVRFLEQQNKVLDTKWALL. An IF rod domain is found at 152–465; sequence EREQIKTLNN…TLLEGEECRL (314 aa). The tract at residues 188 to 206 is linker 1; sequence QEQGTKTVRQGLETLFEQY. Residues 207–298 form a coil 1B region; that stretch reads INDLRKELDN…ALYEAELSQM (92 aa). Positions 299–322 are linker 12; sequence QTHISDTSVVLSMDNNRSLDLDSI. The segment at 323–461 is coil 2; sequence IAEVKAQYEE…ATYRTLLEGE (139 aa). The tract at residues 462-552 is tail; it reads ECRLNGEGVG…TSSTRKSYRP (91 aa). The tract at residues 524–552 is disordered; it reads ISSGLSSSGGSSSTIKYTTTSSTRKSYRP. Low complexity predominate over residues 525–552; that stretch reads SSGLSSSGGSSSTIKYTTTSSTRKSYRP.

It belongs to the intermediate filament family. In terms of assembly, heterodimer of a type I and a type II keratin. KRT6 isomers associate with KRT16 and/or KRT17. Interacts with TCHP.

Epidermis-specific type I keratin involved in wound healing. Involved in the activation of follicular keratinocytes after wounding, while it does not play a major role in keratinocyte proliferation or migration. Participates in the regulation of epithelial migration by inhibiting the activity of SRC during wound repair. The chain is Keratin, type II cytoskeletal 6A (Krt6a) from Rattus norvegicus (Rat).